A 314-amino-acid chain; its full sequence is Mitochondrial thiamine pyrophosphate carrier 1 (314 aa).

6 helical membrane passes run 14–30 (VAAWKTLLAGAVSGLLA), 84–100 (LLYVTYGSAQFSSYSLF), 116–136 (LVVGAFAGITSSIVSYPFDVL), 170–186 (GSIASMTTITLTASIMF), 217–233 (SAGTIGGVIAKIITFPL), and 285–302 (GILVALSKTIPTTFVSFW). Solcar repeat units lie at residues 14–103 (VAAW…FNRY), 110–195 (EARL…IRIY), and 210–310 (ELAT…AIHY).

This sequence belongs to the mitochondrial carrier (TC 2.A.29) family.

The protein localises to the mitochondrion inner membrane. Mitochondrial transporter that mediates uptake of thiamine pyrophosphate (ThPP) into mitochondria. The chain is Mitochondrial thiamine pyrophosphate carrier 1 (TPC1) from Saccharomyces cerevisiae (strain ATCC 204508 / S288c) (Baker's yeast).